Here is a 296-residue protein sequence, read N- to C-terminus: 4-diphosphocytidyl-2-C-methyl-D-erythritol kinase (296 aa).

K11 is an active-site residue. An ATP-binding site is contributed by 95-105; it reads PVAAGMAGGSS. The active site involves D137.

It belongs to the GHMP kinase family. IspE subfamily.

It carries out the reaction 4-CDP-2-C-methyl-D-erythritol + ATP = 4-CDP-2-C-methyl-D-erythritol 2-phosphate + ADP + H(+). It participates in isoprenoid biosynthesis; isopentenyl diphosphate biosynthesis via DXP pathway; isopentenyl diphosphate from 1-deoxy-D-xylulose 5-phosphate: step 3/6. In terms of biological role, catalyzes the phosphorylation of the position 2 hydroxy group of 4-diphosphocytidyl-2C-methyl-D-erythritol. This is 4-diphosphocytidyl-2-C-methyl-D-erythritol kinase from Clostridioides difficile (strain 630) (Peptoclostridium difficile).